Consider the following 971-residue polypeptide: Valine--tRNA ligase (971 aa).

The short motif at P55–H65 is the 'HIGH' region element. A 'KMSKS' region motif is present at residues K572–S576. ATP is bound at residue K575. Residues K906–E933 are a coiled coil.

The protein belongs to the class-I aminoacyl-tRNA synthetase family. ValS type 1 subfamily. Monomer.

It localises to the cytoplasm. It carries out the reaction tRNA(Val) + L-valine + ATP = L-valyl-tRNA(Val) + AMP + diphosphate. Functionally, catalyzes the attachment of valine to tRNA(Val). As ValRS can inadvertently accommodate and process structurally similar amino acids such as threonine, to avoid such errors, it has a 'posttransfer' editing activity that hydrolyzes mischarged Thr-tRNA(Val) in a tRNA-dependent manner. In Acinetobacter baylyi (strain ATCC 33305 / BD413 / ADP1), this protein is Valine--tRNA ligase.